A 498-amino-acid chain; its full sequence is Aspartyl/glutamyl-tRNA(Asn/Gln) amidotransferase subunit B (498 aa).

It belongs to the GatB/GatE family. GatB subfamily. In terms of assembly, heterotrimer of A, B and C subunits.

The catalysed reaction is L-glutamyl-tRNA(Gln) + L-glutamine + ATP + H2O = L-glutaminyl-tRNA(Gln) + L-glutamate + ADP + phosphate + H(+). It catalyses the reaction L-aspartyl-tRNA(Asn) + L-glutamine + ATP + H2O = L-asparaginyl-tRNA(Asn) + L-glutamate + ADP + phosphate + 2 H(+). Its function is as follows. Allows the formation of correctly charged Asn-tRNA(Asn) or Gln-tRNA(Gln) through the transamidation of misacylated Asp-tRNA(Asn) or Glu-tRNA(Gln) in organisms which lack either or both of asparaginyl-tRNA or glutaminyl-tRNA synthetases. The reaction takes place in the presence of glutamine and ATP through an activated phospho-Asp-tRNA(Asn) or phospho-Glu-tRNA(Gln). This chain is Aspartyl/glutamyl-tRNA(Asn/Gln) amidotransferase subunit B, found in Erythrobacter litoralis (strain HTCC2594).